The following is a 112-amino-acid chain: ATP synthase epsilon chain (112 aa).

It belongs to the ATPase epsilon chain family. As to quaternary structure, F-type ATPases have 2 components, CF(1) - the catalytic core - and CF(0) - the membrane proton channel. CF(1) has five subunits: alpha(3), beta(3), gamma(1), delta(1), epsilon(1). CF(0) has three main subunits: a, b and c.

The protein resides in the cell inner membrane. Its function is as follows. Produces ATP from ADP in the presence of a proton gradient across the membrane. This chain is ATP synthase epsilon chain, found in Rickettsia peacockii (strain Rustic).